Consider the following 92-residue polypeptide: MELNILNKTNNELEVELRGETHTLLNLLKDLLIKDERVVTAFYDMKYVSISDPVLYIKTDGADPILVLKDVVAIIVSECDEFIDVFSKAANA.

This sequence belongs to the archaeal Rpo11/eukaryotic RPB11/RPC19 RNA polymerase subunit family. As to quaternary structure, part of the RNA polymerase complex.

Its subcellular location is the cytoplasm. The catalysed reaction is RNA(n) + a ribonucleoside 5'-triphosphate = RNA(n+1) + diphosphate. DNA-dependent RNA polymerase (RNAP) catalyzes the transcription of DNA into RNA using the four ribonucleoside triphosphates as substrates. The protein is DNA-directed RNA polymerase subunit Rpo11 of Methanosarcina mazei (strain ATCC BAA-159 / DSM 3647 / Goe1 / Go1 / JCM 11833 / OCM 88) (Methanosarcina frisia).